Here is a 481-residue protein sequence, read N- to C-terminus: Tagaturonate/fructuronate epimerase (481 aa).

Asp161 serves as the catalytic Proton acceptor. His162 provides a ligand contact to a divalent metal cation. Glu266 (proton donor) is an active-site residue. Lys308 and His341 together coordinate a divalent metal cation.

This sequence belongs to the UxaE family. The cofactor is a divalent metal cation.

The enzyme catalyses keto-D-tagaturonate = keto-D-fructuronate. Catalyzes the epimerization of D-tagaturonate (D-TagA) to D-fructuronate (D-FruA). The chain is Tagaturonate/fructuronate epimerase from Thermotoga maritima (strain ATCC 43589 / DSM 3109 / JCM 10099 / NBRC 100826 / MSB8).